The sequence spans 194 residues: MDMGSKEVLMESPPDYSTGPRSQFRIPCCPVHLKRLLIVVVVVVLVVVVIVGALLMGLHMSQKHTEMVLEMSIGGAPETQKRLALSEHTDTIATFSIGSTGIVLYDYQRLLTAYKPAPGTYCYIMKMAPESIPSLEALARKFKNFQAKSSTPTSKLGQEEGHSAGSDSDSSGRDLAFLGLAVSTLCGELPLYYI.

The segment at 1–21 (MDMGSKEVLMESPPDYSTGPR) is disordered. Positions 1 to 23 (MDMGSKEVLMESPPDYSTGPRSQ) are excised as a propeptide. Residues C28 and C29 are each lipidated (S-palmitoyl cysteine). Residues 59 to 194 (HMSQKHTEMV…LCGELPLYYI (136 aa)) constitute a propeptide that is removed on maturation. A BRICHOS domain is found at 95-194 (FSIGSTGIVL…LCGELPLYYI (100 aa)). The cysteines at positions 122 and 186 are disulfide-linked. The segment at 149 to 170 (SSTPTSKLGQEEGHSAGSDSDS) is disordered.

It is found in the secreted. It localises to the extracellular space. Its subcellular location is the surface film. Functionally, pulmonary surfactant associated proteins promote alveolar stability by lowering the surface tension at the air-liquid interface in the peripheral air spaces. This Rattus norvegicus (Rat) protein is Surfactant protein C.